The sequence spans 273 residues: Pyrroline-5-carboxylate reductase (273 aa).

Belongs to the pyrroline-5-carboxylate reductase family.

Its subcellular location is the cytoplasm. It carries out the reaction L-proline + NADP(+) = (S)-1-pyrroline-5-carboxylate + NADPH + 2 H(+). The enzyme catalyses L-proline + NAD(+) = (S)-1-pyrroline-5-carboxylate + NADH + 2 H(+). It functions in the pathway amino-acid biosynthesis; L-proline biosynthesis; L-proline from L-glutamate 5-semialdehyde: step 1/1. Catalyzes the reduction of 1-pyrroline-5-carboxylate (PCA) to L-proline. This Pseudomonas aeruginosa (strain ATCC 15692 / DSM 22644 / CIP 104116 / JCM 14847 / LMG 12228 / 1C / PRS 101 / PAO1) protein is Pyrroline-5-carboxylate reductase.